A 488-amino-acid polypeptide reads, in one-letter code: Ankyrin repeat domain-containing protein 13C (488 aa).

The interval 1 to 60 (MTGEKIRSVRKERKSGLDLLEPDEEPAATGPAKHRGSKIFSGGNHRISRSSSSPGDPDGA) is disordered. Residues 41-59 (SGGNHRISRSSSSPGDPDG) show a composition bias toward low complexity. ANK repeat units follow at residues 58 to 87 (DGAYPVHECVFRGDVRRLSSLIRTQNIAQK), 90 to 119 (HGNTPLHLAVMMGHKECAHLLLAHNAPVKV), and 123 to 152 (QGWSPLAEAISYGDRQMITALLRKLKQQSR).

It is found in the endoplasmic reticulum membrane. Acts as a molecular chaperone for G protein-coupled receptors, regulating their biogenesis and exit from the ER. This chain is Ankyrin repeat domain-containing protein 13C (ankrd13c), found in Danio rerio (Zebrafish).